We begin with the raw amino-acid sequence, 188 residues long: Ribosome-recycling factor (188 aa).

It belongs to the RRF family.

It localises to the cytoplasm. Responsible for the release of ribosomes from messenger RNA at the termination of protein biosynthesis. May increase the efficiency of translation by recycling ribosomes from one round of translation to another. The protein is Ribosome-recycling factor of Lawsonia intracellularis (strain PHE/MN1-00).